The sequence spans 241 residues: GTP cyclohydrolase III (241 aa).

The protein belongs to the archaeal-type GTP cyclohydrolase family.

The catalysed reaction is GTP + 3 H2O = 2-amino-5-formylamino-6-(5-phospho-D-ribosylamino)pyrimidin-4(3H)-one + 2 phosphate + 2 H(+). Functionally, catalyzes the formation of 2-amino-5-formylamino-6-ribofuranosylamino-4(3H)-pyrimidinone ribonucleotide monophosphate and inorganic phosphate from GTP. Also has an independent pyrophosphate phosphohydrolase activity. The chain is GTP cyclohydrolase III from Aeropyrum pernix (strain ATCC 700893 / DSM 11879 / JCM 9820 / NBRC 100138 / K1).